Here is a 432-residue protein sequence, read N- to C-terminus: Homeobox protein Hox-D3 (432 aa).

Disordered stretches follow at residues 43 to 62, 68 to 197, 253 to 280, and 400 to 432; these read YSTP…LDTD, CSIQ…SKRV, QKAK…AGHV, and HHGP…LTHL. Positions 97-106 are enriched in gly residues; the sequence is NSQGGGGGSQ. Residues 116–131 are compositionally biased toward pro residues; that stretch reads PPQPPPPPPTLPPSSP. Residues 148-158 are compositionally biased toward polar residues; that stretch reads NASSSSATISK. The short motif at 160–165 is the Antp-type hexapeptide element; it reads IFPWMK. Positions 194–253 form a DNA-binding region, homeobox; sequence SKRVRTAYTSAQLVELEKEFHFNRYLCRPRRVEMANLLNLTERQIKIWFQNRRMKYKKDQ.

It belongs to the Antp homeobox family.

Its subcellular location is the nucleus. Functionally, sequence-specific transcription factor which is part of a developmental regulatory system that provides cells with specific positional identities on the anterior-posterior axis. This Homo sapiens (Human) protein is Homeobox protein Hox-D3 (HOXD3).